The chain runs to 120 residues: U13-lycotoxin-Ls1f (120 aa).

An N-terminal signal peptide occupies residues 1–16 (MKILFVLISILYAVYC). Residues 17 to 54 (FSSEEDVDSAYLANELEPVEDINSEQYAALEPKEEQER) constitute a propeptide that is removed on maturation. 4 cysteine pairs are disulfide-bonded: C56-C70, C63-C76, C69-C87, and C78-C85. Positions 56-95 (CAGMGQDCKDDCDCCLNIATCNCWFGRYFCSCTFGDYQTC) constitute an Agouti domain.

This sequence belongs to the neurotoxin 05 (agouti) family. Post-translationally, contains 6 disulfide bonds. Expressed by the venom gland.

It localises to the secreted. This chain is U13-lycotoxin-Ls1f, found in Lycosa singoriensis (Wolf spider).